The chain runs to 171 residues: Putative phosphoesterase BH1439 (171 aa).

Histidine 34 serves as the catalytic Proton donor. 2 consecutive short sequence motifs (HXTX) follow at residues 34 to 37 (HVTL) and 115 to 118 (HLTI). The active-site Proton acceptor is histidine 115.

Belongs to the 2H phosphoesterase superfamily. YjcG family.

The chain is Putative phosphoesterase BH1439 from Halalkalibacterium halodurans (strain ATCC BAA-125 / DSM 18197 / FERM 7344 / JCM 9153 / C-125) (Bacillus halodurans).